A 142-amino-acid chain; its full sequence is MNFKYIVAVSFLIASGYARSEENDVQSLSQREVLEEESLREIRGIGGALLSAGKSALKGLAKGFAEHFGKRTAEDHEVMKRLEAVMRDLDSLDHPEEASERETRGFNQEEIANLFTKKEKRILGPVLSLVGSALGGLIKKIG.

The signal sequence occupies residues 1–18; that stretch reads MNFKYIVAVSFLIASGYA. The propeptide occupies 19 to 43; the sequence is RSEENDVQSLSQREVLEEESLREIR. Phenylalanine 68 carries the phenylalanine amide modification. A propeptide spanning residues 72–121 is cleaved from the precursor; that stretch reads TAEDHEVMKRLEAVMRDLDSLDHPEEASERETRGFNQEEIANLFTKKEKR. Isoleucine 141 is subject to Isoleucine amide.

This sequence belongs to the bombinin family. In terms of tissue distribution, expressed by the skin glands.

The protein resides in the secreted. Its function is as follows. Maximin-y shows antimicrobial activity against bacteria and against the fungus C.albicans. It has little hemolytic activity. Functionally, maximin-Hv shows antimicrobial activity against bacteria and against the fungus C.albicans. Shows strong hemolytic activity. The protein is Maximins y/Hv type 1 of Bombina maxima (Giant fire-bellied toad).